A 75-amino-acid polypeptide reads, in one-letter code: uncharacterized protein (75 aa).

The segment covering 19 to 38 (FHNTAPSKTNVNVPRANKSQ) has biased composition (polar residues). Residues 19 to 42 (FHNTAPSKTNVNVPRANKSQSKGK) form a disordered region. Residues 47–66 (LLVLVGTLALVTSVISVNYQ) form a helical membrane-spanning segment.

Its subcellular location is the membrane. This is an uncharacterized protein from Saccharomyces cerevisiae (strain ATCC 204508 / S288c) (Baker's yeast).